The sequence spans 565 residues: uncharacterized protein (565 aa).

The next 5 helical transmembrane spans lie at 4 to 26 (FVQF…AVWV), 33 to 55 (GYGL…VGAA), 68 to 90 (SLLY…VNAL), 97 to 119 (YAIL…TQFF), and 162 to 184 (ISAM…IILL). RCK C-terminal domains follow at residues 210–295 (PNVD…LGPE) and 296–379 (VPDA…IFGV). The next 5 membrane-spanning stretches (helical) occupy residues 389-411 (LLTL…PAFG), 415-432 (GLGN…VSSI), 453-472 (LGLI…DLLT), 482-504 (IFIV…GFHI), and 539-561 (WLGF…YFAM).

The protein belongs to the AAE transporter (TC 2.A.81) family.

The protein localises to the cell membrane. This is an uncharacterized protein from Bordetella parapertussis (strain 12822 / ATCC BAA-587 / NCTC 13253).